The chain runs to 153 residues: Cell division protein SepF (153 aa).

The protein belongs to the SepF family. Homodimer. Interacts with FtsZ.

The protein resides in the cytoplasm. In terms of biological role, cell division protein that is part of the divisome complex and is recruited early to the Z-ring. Probably stimulates Z-ring formation, perhaps through the cross-linking of FtsZ protofilaments. Its function overlaps with FtsA. This is Cell division protein SepF from Clostridium tetani (strain Massachusetts / E88).